The sequence spans 461 residues: Protein YIG1 (461 aa).

The tract at residues 58–80 (SNVGEDGGDVGNYSEEDDDGDEE) is disordered. Acidic residues predominate over residues 71–80 (SEEDDDGDEE).

It localises to the cytoplasm. Its subcellular location is the nucleus. Involved in the regulation of anaerobiotic glycerol metabolism. The sequence is that of Protein YIG1 (YIG1) from Saccharomyces cerevisiae (strain ATCC 204508 / S288c) (Baker's yeast).